A 1053-amino-acid chain; its full sequence is 3-hydroxy-3-methylglutaryl-coenzyme A reductase (1053 aa).

Topologically, residues 1-8 are cytoplasmic; that stretch reads MIYKLAAR. A helical transmembrane segment spans residues 9 to 29; that stretch reads YPIQVIAIVGILVSMAYFSFL. Residues 30 to 203 lie on the Lumenal side of the membrane; it reads EALTQEDFPV…LKIASQASKT (174 aa). Asn137 carries an N-linked (GlcNAc...) asparagine glycan. The helical transmembrane segment at 204-224 threads the bilayer; it reads ELLIVGTAYACMLISIVSLYL. The region spanning 204–365 is the SSD domain; it reads ELLIVGTAYA…FSFFVAILTL (162 aa). Topologically, residues 225–232 are cytoplasmic; it reads KMRRLGSK. The helical transmembrane segment at 233-253 threads the bilayer; it reads FWLFFSVLLSTLFSVQFAMTL. Topologically, residues 254 to 258 are lumenal; sequence VRASG. A helical transmembrane segment spans residues 259–279; sequence VRISLVSLIESLPFLINVVAL. Over 280-320 the chain is Cytoplasmic; the sequence is DKAAELTRQVITRCSVSDSHSPMHEDIAKACRNAAPPILRH. The next 2 membrane-spanning stretches (helical) occupy residues 321–341 and 342–362; these read FSFG…IKQF and FLFA…FVAI. Residues 363–417 are Cytoplasmic-facing; sequence LTLKLEMRRYNAKDDVRKVLIEEGLSESTARHVADGNDSSATTSAGSRYFKVRYG. A helical transmembrane segment spans residues 418–438; sequence TKIILFIFIAFNLFELCSIPF. Over 439-526 the chain is Lumenal; sequence KHYAATSAAA…NNWSHYISAS (88 aa). Residue Asn518 is glycosylated (N-linked (GlcNAc...) asparagine). Residues 527 to 547 traverse the membrane as a helical segment; that stretch reads FLSKWIVCALSLSIAVNVFLL. The Cytoplasmic portion of the chain corresponds to 548–1053; it reads NAARLNSIKE…KSVNSRVPGR (506 aa). Catalysis depends on Glu712, which acts as the Charge relay system. Position 718–724 (718–724) interacts with CoA; the sequence is STMRGCK. NADP(+)-binding positions include 779-781 and 806-814; these read SRF and DAMGMNMIS. The Charge relay system role is filled by Lys846. 875-877 is a binding site for CoA; it reads VLK. The active-site Charge relay system is the Asp922. 1017-1018 is a CoA binding site; sequence SH. His1018 (proton donor) is an active-site residue. Residue 1022–1023 participates in NADP(+) binding; that stretch reads NR. Ser1024 is modified (phosphoserine). Phosphothreonine is present on Thr1028. The interval 1028–1053 is disordered; sequence TPAMDSSAKKPATDALKSVNSRVPGR.

This sequence belongs to the HMG-CoA reductase family.

Its subcellular location is the endoplasmic reticulum membrane. The protein localises to the nucleus envelope. The enzyme catalyses (R)-mevalonate + 2 NADP(+) + CoA = (3S)-3-hydroxy-3-methylglutaryl-CoA + 2 NADPH + 2 H(+). It functions in the pathway metabolic intermediate biosynthesis; (R)-mevalonate biosynthesis; (R)-mevalonate from acetyl-CoA: step 3/3. Its function is as follows. Part of the first module of ergosterol biosynthesis pathway that includes the early steps of the pathway, conserved across all eukaryotes, and which results in the formation of mevalonate from acetyl-coenzyme A (acetyl-CoA). Hmg1 catalyzes the reduction of hydroxymethylglutaryl-CoA (HMG-CoA) to mevalonate. The first module starts with the action of the cytosolic acetyl-CoA acetyltransferase eg10 that catalyzes the formation of acetoacetyl-CoA. The hydroxymethylglutaryl-CoA synthases erg13 then condenses acetyl-CoA with acetoacetyl-CoA to form HMG-CoA. The rate-limiting step of the early module is the reduction to mevalonate by the 3-hydroxy-3-methylglutaryl-coenzyme A (HMG-CoA) reductases hcs1. The protein is 3-hydroxy-3-methylglutaryl-coenzyme A reductase of Schizosaccharomyces pombe (strain 972 / ATCC 24843) (Fission yeast).